The chain runs to 952 residues: Isoleucine--tRNA ligase (952 aa).

The 'HIGH' region signature appears at 58–68; the sequence is PYANGDIHIGH. Glu576 provides a ligand contact to L-isoleucyl-5'-AMP. Positions 617 to 621 match the 'KMSKS' region motif; it reads KMSKS. Residue Lys620 participates in ATP binding. Residues Cys915, Cys918, Cys935, and Cys938 each coordinate Zn(2+).

It belongs to the class-I aminoacyl-tRNA synthetase family. IleS type 1 subfamily. Monomer. Requires Zn(2+) as cofactor.

Its subcellular location is the cytoplasm. It catalyses the reaction tRNA(Ile) + L-isoleucine + ATP = L-isoleucyl-tRNA(Ile) + AMP + diphosphate. Its function is as follows. Catalyzes the attachment of isoleucine to tRNA(Ile). As IleRS can inadvertently accommodate and process structurally similar amino acids such as valine, to avoid such errors it has two additional distinct tRNA(Ile)-dependent editing activities. One activity is designated as 'pretransfer' editing and involves the hydrolysis of activated Val-AMP. The other activity is designated 'posttransfer' editing and involves deacylation of mischarged Val-tRNA(Ile). The protein is Isoleucine--tRNA ligase of Aliivibrio fischeri (strain MJ11) (Vibrio fischeri).